The following is a 430-amino-acid chain: Adenylosuccinate synthetase (430 aa).

GTP is bound by residues 13–19 and 41–43; these read GDEGKGK and GHT. Catalysis depends on Asp14, which acts as the Proton acceptor. The Mg(2+) site is built by Asp14 and Gly41. IMP-binding positions include 14-17, 39-42, Thr130, Arg144, Gln225, Thr240, and Arg304; these read DEGK and NAGH. His42 functions as the Proton donor in the catalytic mechanism. 300-306 is a binding site for substrate; it reads STTGRAR. GTP contacts are provided by residues Arg306, 332-334, and 414-416; these read KLD and STG.

It belongs to the adenylosuccinate synthetase family. As to quaternary structure, homodimer. The cofactor is Mg(2+).

Its subcellular location is the cytoplasm. It catalyses the reaction IMP + L-aspartate + GTP = N(6)-(1,2-dicarboxyethyl)-AMP + GDP + phosphate + 2 H(+). It participates in purine metabolism; AMP biosynthesis via de novo pathway; AMP from IMP: step 1/2. Plays an important role in the de novo pathway of purine nucleotide biosynthesis. Catalyzes the first committed step in the biosynthesis of AMP from IMP. This Pseudomonas putida (strain W619) protein is Adenylosuccinate synthetase.